The chain runs to 116 residues: Large ribosomal subunit protein bL19 (116 aa).

It belongs to the bacterial ribosomal protein bL19 family.

This protein is located at the 30S-50S ribosomal subunit interface and may play a role in the structure and function of the aminoacyl-tRNA binding site. This is Large ribosomal subunit protein bL19 from Ectopseudomonas mendocina (strain ymp) (Pseudomonas mendocina).